A 567-amino-acid polypeptide reads, in one-letter code: Amino-acid acetyltransferase, mitochondrial (567 aa).

The 167-residue stretch at 392–558 (KDSPQTNPLH…ARLKEYAKHI (167 aa)) folds into the N-acetyltransferase domain.

The protein belongs to the acetyltransferase family.

The protein resides in the mitochondrion. It carries out the reaction L-glutamate + acetyl-CoA = N-acetyl-L-glutamate + CoA + H(+). It participates in amino-acid biosynthesis; L-arginine biosynthesis; N(2)-acetyl-L-ornithine from L-glutamate: step 1/4. Its function is as follows. N-acetylglutamate synthase involved in arginine biosynthesis. The protein is Amino-acid acetyltransferase, mitochondrial (ARG2) of Vanderwaltozyma polyspora (strain ATCC 22028 / DSM 70294 / BCRC 21397 / CBS 2163 / NBRC 10782 / NRRL Y-8283 / UCD 57-17) (Kluyveromyces polysporus).